The sequence spans 340 residues: Sideroflexin-5 (340 aa).

The next 4 membrane-spanning stretches (helical) occupy residues 103–123 (IFMP…VVGL), 163–183 (FIQG…GLNV), 254–274 (LTRV…MSML), and 287–307 (LLPV…PLAI).

It belongs to the sideroflexin family. As to expression, primarily expressed in the brain.

Its subcellular location is the mitochondrion inner membrane. The enzyme catalyses citrate(in) = citrate(out). Its function is as follows. Mitochondrial amino-acid transporter. Transports citrate. Does not act as a serine transporter: not able to mediate transport of serine into mitochondria. In brown adipose tissue, plays a role in the regulation of UCP1-dependent thermogenesis probably by supporting mitochondrial glycerol-3-phosphate utilization. The protein is Sideroflexin-5 of Homo sapiens (Human).